The chain runs to 543 residues: uncharacterized protein (543 aa).

The TRAM domain occupies 1-59 (MLKKNDIVEVEIVDLTHEGAGVAKVDGLVFFVENALPSEKILMRVLKVNKKIGFGKVEK). S-adenosyl-L-methionine is bound by residues Gln283, Tyr312, Glu333, and Asp381. Residue Cys408 is the Nucleophile of the active site.

Belongs to the class I-like SAM-binding methyltransferase superfamily. RNA M5U methyltransferase family.

This is an uncharacterized protein from Streptococcus pneumoniae serotype 4 (strain ATCC BAA-334 / TIGR4).